Reading from the N-terminus, the 127-residue chain is UPF0102 protein Geob_1494 (127 aa).

It belongs to the UPF0102 family.

The protein is UPF0102 protein Geob_1494 of Geotalea daltonii (strain DSM 22248 / JCM 15807 / FRC-32) (Geobacter daltonii).